Consider the following 159-residue polypeptide: 2-C-methyl-D-erythritol 2,4-cyclodiphosphate synthase (159 aa).

A divalent metal cation-binding residues include D10 and H12. 4-CDP-2-C-methyl-D-erythritol 2-phosphate is bound by residues 10–12 (DVH) and 36–37 (HS). H44 lines the a divalent metal cation pocket. Residues 58 to 60 (DIG) and R144 each bind 4-CDP-2-C-methyl-D-erythritol 2-phosphate.

It belongs to the IspF family. In terms of assembly, homotrimer. A divalent metal cation serves as cofactor.

The enzyme catalyses 4-CDP-2-C-methyl-D-erythritol 2-phosphate = 2-C-methyl-D-erythritol 2,4-cyclic diphosphate + CMP. It participates in isoprenoid biosynthesis; isopentenyl diphosphate biosynthesis via DXP pathway; isopentenyl diphosphate from 1-deoxy-D-xylulose 5-phosphate: step 4/6. In terms of biological role, involved in the biosynthesis of isopentenyl diphosphate (IPP) and dimethylallyl diphosphate (DMAPP), two major building blocks of isoprenoid compounds. Catalyzes the conversion of 4-diphosphocytidyl-2-C-methyl-D-erythritol 2-phosphate (CDP-ME2P) to 2-C-methyl-D-erythritol 2,4-cyclodiphosphate (ME-CPP) with a corresponding release of cytidine 5-monophosphate (CMP). This Paraburkholderia phymatum (strain DSM 17167 / CIP 108236 / LMG 21445 / STM815) (Burkholderia phymatum) protein is 2-C-methyl-D-erythritol 2,4-cyclodiphosphate synthase.